A 245-amino-acid polypeptide reads, in one-letter code: MHNFYNYSPALGKTYVYENKYYKNLGTVIKQAKRQKHLEQHEIEERSLDHLDRYLVAEDPFYGPGKNQKLTLFKEIRNVKPDTMKLVVNWSGKEFLRETWTRFMEDSFPIVNDQEVMDIYLTINVRPTRPNRCYKFVAQHALRCDEGYVPHEVIRIVEPSTVENNEYRISLAKRGGGCPIRNLHSAYTTSFEHFLNSVIWDNFYKPIVYVGTTSAEEEEILLEVSLVFKIKEFAPDAPLFQGPAY.

This sequence belongs to the polyhedrin family.

Major component of the virus occlusion bodies, which are large proteinaceous structures (polyhedra), that protect the virus from the outside environment for extended periods until they are ingested by insect larvae. The polypeptide is Polyhedrin (PH) (Lepidoptera (butterflies and moths)).